Here is an 875-residue protein sequence, read N- to C-terminus: Ubiquitin-protein ligase E3A (875 aa).

Residues 44–83 form a C4-type; atypical zinc finger; it reads CGNEACTNEFCASCPTFLRMDNNAAAIKALELYKINAKLC. Over residues 175-186 the composition is skewed to basic and acidic residues; sequence KEELKSLQAKDE. Positions 175-226 are disordered; sequence KEELKSLQAKDEDKDEDEKEKAACSAAAMEEDSEASSSRIGDSSQGDNNLQK. Residues 213–225 show a composition bias toward polar residues; the sequence is RIGDSSQGDNNLQ. Ser-218 is subject to Phosphoserine. The interval 401–418 is E6-binding; the sequence is IPESSELTLQELLGEERR. The interval 418–517 is interaction with HCV core protein; it reads RNKKGPRVDP…TVLYSLVQGQ (100 aa). Tyr-659 carries the phosphotyrosine; by ABL1 modification. In terms of domain architecture, HECT spans 776 to 875; the sequence is YDGGYTRDSV…ITYAKGFGML (100 aa). Cys-843 acts as the Glycyl thioester intermediate in catalysis.

The active form is probably a homotrimer. Binds UBQLN1 and UBQLN2. Interacts with the 26S proteasome. Interacts with BPY2. Interacts with HIF1AN, MAPK6 and NEURL4; interaction with MAPK6 may be mediated by NEURL4. Interacts with the proteasomal subunit PSMD4. Interacts with ESR1 and WBP2. Interacts with BMAL1. Interacts with ARC. As to quaternary structure, (Microbial infection) Interacts with HCV core protein and targets it to degradation. In terms of assembly, (Microbial infection) Interacts with the E6 protein of the cancer-associated human papillomavirus types 16 and 18. The E6/E6-AP complex binds to and targets the p53/TP53 tumor-suppressor protein for ubiquitin-mediated proteolysis. Post-translationally, phosphorylation at Tyr-659 by ABL1 impairs E3 ligase activity and protects p53/TP53 from degradation in (HPV)-infected cells.

The protein resides in the cytoplasm. The protein localises to the nucleus. The enzyme catalyses S-ubiquitinyl-[E2 ubiquitin-conjugating enzyme]-L-cysteine + [acceptor protein]-L-lysine = [E2 ubiquitin-conjugating enzyme]-L-cysteine + N(6)-ubiquitinyl-[acceptor protein]-L-lysine.. Its pathway is protein modification; protein ubiquitination. Its function is as follows. E3 ubiquitin-protein ligase which accepts ubiquitin from an E2 ubiquitin-conjugating enzyme in the form of a thioester and transfers it to its substrates. Several substrates have been identified including the BMAL1, ARC, LAMTOR1, RAD23A and RAD23B, MCM7 (which is involved in DNA replication), annexin A1, the PML tumor suppressor, and the cell cycle regulator CDKN1B. Additionally, may function as a cellular quality control ubiquitin ligase by helping the degradation of the cytoplasmic misfolded proteins. Finally, UBE3A also promotes its own degradation in vivo. Plays an important role in the regulation of the circadian clock: involved in the ubiquitination of the core clock component BMAL1, leading to its proteasomal degradation. Acts as transcriptional coactivator of progesterone receptor PGR upon progesterone hormone activation. Acts as a regulator of synaptic development by mediating ubiquitination and degradation of ARC. Required for synaptic remodeling in neurons by mediating ubiquitination and degradation of LAMTOR1, thereby limiting mTORC1 signaling and activity-dependent synaptic remodeling. Synergizes with WBP2 in enhancing PGR activity. (Microbial infection) Catalyzes the high-risk human papilloma virus E6-mediated ubiquitination of p53/TP53, contributing to the neoplastic progression of cells infected by these viruses. This is Ubiquitin-protein ligase E3A from Homo sapiens (Human).